A 477-amino-acid chain; its full sequence is RNA pseudouridine synthase 6, chloroplastic (477 aa).

A chloroplast-targeting transit peptide spans 1-52 (MPKAAASLASLLPQLWHRPVQPPPFLHRALSSSSPLLRRHRAALHSPAAPLS). The region spanning 98–205 (EVAVDFISRS…FPRCYEIDWK (108 aa)) is the S4 RNA-binding domain. Residue D258 is part of the active site.

This sequence belongs to the pseudouridine synthase RluA family.

The protein resides in the plastid. It is found in the chloroplast. The catalysed reaction is a uridine in RNA = a pseudouridine in RNA. This is RNA pseudouridine synthase 6, chloroplastic from Oryza sativa subsp. japonica (Rice).